A 319-amino-acid chain; its full sequence is Cytochrome f (319 aa).

Residues 1–35 (MQKKDVCEYITKWVSVTISTLVTIGVLVFPLSSEA) form the signal peptide. Heme-binding residues include Y36, C56, C59, and H60. The chain crosses the membrane as a helical span at residues 285-305 (IQGLLVFFASVVLAQIFLVLK).

The protein belongs to the cytochrome f family. The 4 large subunits of the cytochrome b6-f complex are cytochrome b6, subunit IV (17 kDa polypeptide, petD), cytochrome f and the Rieske protein, while the 4 small subunits are PetG, PetL, PetM and PetN. The complex functions as a dimer. Requires heme as cofactor.

The protein resides in the plastid. It is found in the chloroplast thylakoid membrane. Functionally, component of the cytochrome b6-f complex, which mediates electron transfer between photosystem II (PSII) and photosystem I (PSI), cyclic electron flow around PSI, and state transitions. This Zygnema circumcarinatum (Green alga) protein is Cytochrome f.